The following is a 524-amino-acid chain: Adhesion G-protein coupled receptor G5 (524 aa).

Residues 1 to 23 form the signal peptide; the sequence is MDPHGALFFYLCLLAAQVVLVET. Topologically, residues 24–246 are extracellular; that stretch reads LSDLLVLMKR…PAELQVPLEY (223 aa). 6 N-linked (GlcNAc...) asparagine glycosylation sites follow: Asn58, Asn65, Asn96, Asn143, Asn169, and Asn175. One can recognise a GAIN-B domain in the interval 74 to 235; it reads QSLVFKLSCD…AVLMQLSGDP (162 aa). 2 disulfides stabilise this stretch: Cys185–Cys217 and Cys205–Cys219. The segment at 185 to 235 is GPS; that stretch reads CVFWKEGASKSSWGAWSPEGCYTEQPSATQVLCHCNHLTYFAVLMQLSGDP. The interval 224 to 232 is stachel; that stretch reads YFAVLMQLS. The chain crosses the membrane as a helical span at residues 247-267; that stretch reads ISFVGCSISIVASLLTILLYA. At 268-284 the chain is on the cytoplasmic side; the sequence is QSRKQSDSTTRIHMNLN. Residues 285-305 traverse the membrane as a helical segment; that stretch reads GSVLLLNVTFLLSSQMTLPTM. The Extracellular segment spans residues 306-319; that stretch reads PRPVCKVLAAVLHY. The cysteines at positions 310 and 400 are disulfide-linked. Residues 320–340 traverse the membrane as a helical segment; that stretch reads ALLSSLTWMAIEGFNLYLFLG. The Cytoplasmic segment spans residues 341–351; it reads RVYNAYIRRYL. A helical membrane pass occupies residues 352–372; it reads LKLCMLGWGFPALLVLLLLMI. At 373–413 the chain is on the extracellular side; sequence KSSVYGPCVTSLSKSQENGTGFQNVSMCWIRSPMVHSILVM. Residues Asn390 and Asn396 are each glycosylated (N-linked (GlcNAc...) asparagine). The chain crosses the membrane as a helical span at residues 414-434; it reads GYGGFTSLFNLVVLAWALWIL. The Cytoplasmic portion of the chain corresponds to 435–453; it reads CRLRAREKALSPWAYRDTA. The chain crosses the membrane as a helical span at residues 454-476; it reads MVLGLTVLLGTTWTLAFFSFGVF. The Extracellular portion of the chain corresponds to 477 to 480; sequence LLPQ. A helical membrane pass occupies residues 481-500; that stretch reads LFLFTIFNSLYGFFLFLWFC. Residues 501–524 lie on the Cytoplasmic side of the membrane; the sequence is SQKRYSDAEAKAEMEAVSSSQMTH.

It belongs to the G-protein coupled receptor 2 family. Adhesion G-protein coupled receptor (ADGR) subfamily. As to quaternary structure, heterodimer of 2 chains generated by proteolytic processing; the large extracellular N-terminal fragment and the membrane-bound C-terminal fragment predominantly remain associated and non-covalently linked. Post-translationally, autoproteolytically processed at the GPS region of the GAIN-B domain; this cleavage modulates receptor activity. In terms of tissue distribution, expressed at least in kidney, heart, brain and spleen. As to expression, isoform 1 is predominant in spleen. In the kidney, both isoform 1 and isoform 2 are expressed at similar levels. Isoform 2 is the major form in heart and brain. In the kidney, both isoform 1 and isoform 2 are expressed at similar levels.

The protein localises to the cell membrane. Its activity is regulated as follows. Forms a heterodimer of 2 chains generated by proteolytic processing that remain associated through non-covalent interactions mediated by the GAIN-B domain. In the inactivated receptor, the Stachel sequence (also named stalk) is embedded in the GAIN-B domain, where it adopts a beta-strand conformation. On activation, the Stachel moves into the 7 transmembrane region and adopts a twisted hook-shaped configuration that forms contacts within the receptor, leading to coupling of a G-alpha protein, which activates signaling. The cleaved GAIN-B and N-terminal domains can then dissociate from the rest of the receptor. In terms of biological role, orphan adhesion G-protein coupled receptor (aGPCR). Ligand binding causes a conformation change that triggers signaling via guanine nucleotide-binding proteins (G proteins) and modulates the activity of downstream effectors, such as adenylate cyclase. ADGRG5 is specifically coupled to G(s) G proteins and mediates activation of adenylate cyclase activity. Isoform 1, but not isoform 2, is constitutively active, as evidenced by elevated basal cAMP levels, and responds to mechanical activation (shaking). The protein is Adhesion G-protein coupled receptor G5 of Mus musculus (Mouse).